Reading from the N-terminus, the 860-residue chain is Leucine--tRNA ligase (860 aa).

A 'HIGH' region motif is present at residues 42–52; that stretch reads PYPSGRLHMGH. A 'KMSKS' region motif is present at residues 619–623; that stretch reads KMSKS. Lys622 serves as a coordination point for ATP.

This sequence belongs to the class-I aminoacyl-tRNA synthetase family.

It localises to the cytoplasm. The catalysed reaction is tRNA(Leu) + L-leucine + ATP = L-leucyl-tRNA(Leu) + AMP + diphosphate. In Escherichia coli O81 (strain ED1a), this protein is Leucine--tRNA ligase.